Reading from the N-terminus, the 371-residue chain is Cytochrome b (371 aa).

The next 4 helical transmembrane spans lie at 25–45 (FGSM…FLAV), 69–90 (WMMQ…YIHI), 105–125 (WMSG…GYVL), and 170–190 (FFAL…LHII). Heme b contacts are provided by H75 and H89. Residues H174 and H188 each coordinate heme b. H193 serves as a coordination point for a ubiquinone. A run of 4 helical transmembrane segments spans residues 218–238 (HKDL…VSFF), 280–300 (LGGA…PFTH), 312–332 (FSQL…WAAT), and 339–358 (FIVI…LLIP).

It belongs to the cytochrome b family. In terms of assembly, the cytochrome bc1 complex contains 3 respiratory subunits (MT-CYB, CYC1 and UQCRFS1), 2 core proteins (UQCRC1 and UQCRC2) and probably 6 low-molecular weight proteins. Requires heme b as cofactor.

It is found in the mitochondrion inner membrane. In terms of biological role, component of the ubiquinol-cytochrome c reductase complex (complex III or cytochrome b-c1 complex) that is part of the mitochondrial respiratory chain. The b-c1 complex mediates electron transfer from ubiquinol to cytochrome c. Contributes to the generation of a proton gradient across the mitochondrial membrane that is then used for ATP synthesis. The polypeptide is Cytochrome b (MT-CYB) (Leiopython albertisii (Northern white-lipped python)).